The chain runs to 336 residues: IgLON family member 5 (336 aa).

An N-terminal signal peptide occupies residues 1–30 (MPPPAPGARLRLLAAAALAGLAVISRGLLS). Ig-like C2-type domains lie at 33-122 (LEFN…QPYT), 132-217 (PARI…VNYP), and 218-307 (PTIT…MRLL). Residues Asn-41, Asn-49, Asn-67, and Asn-137 are each glycosylated (N-linked (GlcNAc...) asparagine). An intrachain disulfide couples Cys-54 to Cys-112. Intrachain disulfides connect Cys-154/Cys-195 and Cys-238/Cys-291. Asn-288 carries N-linked (GlcNAc...) asparagine glycosylation.

This sequence belongs to the immunoglobulin superfamily. IgLON family.

It localises to the secreted. In Homo sapiens (Human), this protein is IgLON family member 5 (IGLON5).